The chain runs to 58 residues: UPF0391 membrane protein Plav_0056 (58 aa).

A run of 2 helical transmembrane segments spans residues W4 to V24 and I30 to V50.

This sequence belongs to the UPF0391 family.

The protein resides in the cell membrane. This chain is UPF0391 membrane protein Plav_0056, found in Parvibaculum lavamentivorans (strain DS-1 / DSM 13023 / NCIMB 13966).